We begin with the raw amino-acid sequence, 229 residues long: Protein TraJ (229 aa).

It is found in the cytoplasm. In terms of biological role, this protein is essential for positively regulating the expression of transfer genes that are involved in the conjugal transfer of DNA between bacterial cells. The chain is Protein TraJ (traJ) from Escherichia coli (strain K12).